A 607-amino-acid polypeptide reads, in one-letter code: Glucose-6-phosphate isomerase, glycosomal (607 aa).

The active-site Proton donor is glutamate 411. Residues histidine 442 and lysine 571 contribute to the active site. The Microbody targeting signal signature appears at 605–607 (SHL).

It belongs to the GPI family. As to quaternary structure, homodimer.

It is found in the glycosome. The enzyme catalyses alpha-D-glucose 6-phosphate = beta-D-fructose 6-phosphate. The protein operates within carbohydrate degradation; glycolysis; D-glyceraldehyde 3-phosphate and glycerone phosphate from D-glucose: step 2/4. This is Glucose-6-phosphate isomerase, glycosomal (PGI) from Trypanosoma brucei brucei.